We begin with the raw amino-acid sequence, 163 residues long: Lipoprotein signal peptidase (163 aa).

Transmembrane regions (helical) follow at residues 9 to 29 (AWPW…SKYL), 42 to 62 (ILPF…SFLG), 67 to 87 (WQII…ILWL), and 93 to 113 (SEIM…GNFI). Residues D123 and D141 contribute to the active site. The helical transmembrane segment at 137-157 (FNVADSAICVGVFLLIVHMLL) threads the bilayer.

It belongs to the peptidase A8 family.

It is found in the cell inner membrane. The enzyme catalyses Release of signal peptides from bacterial membrane prolipoproteins. Hydrolyzes -Xaa-Yaa-Zaa-|-(S,diacylglyceryl)Cys-, in which Xaa is hydrophobic (preferably Leu), and Yaa (Ala or Ser) and Zaa (Gly or Ala) have small, neutral side chains.. It participates in protein modification; lipoprotein biosynthesis (signal peptide cleavage). In terms of biological role, this protein specifically catalyzes the removal of signal peptides from prolipoproteins. In Coxiella burnetii (strain RSA 331 / Henzerling II), this protein is Lipoprotein signal peptidase.